The following is a 379-amino-acid chain: Chaperone protein DnaJ (379 aa).

Residues 5–70 (DYYETLGCDR…QKRAAYDRFG (66 aa)) form the J domain. Residues 134–212 (GKTAQIKIPT…CGGAGRVTRE (79 aa)) form a CR-type zinc finger. The Zn(2+) site is built by Cys147, Cys150, Cys164, Cys167, Cys186, Cys189, Cys200, and Cys203. CXXCXGXG motif repeat units lie at residues 147-154 (CETCSGTG), 164-171 (CRMCGGAG), 186-193 (CPNCQGRG), and 200-207 (CSDCGGAG).

Belongs to the DnaJ family. Homodimer. It depends on Zn(2+) as a cofactor.

The protein localises to the cytoplasm. Participates actively in the response to hyperosmotic and heat shock by preventing the aggregation of stress-denatured proteins and by disaggregating proteins, also in an autonomous, DnaK-independent fashion. Unfolded proteins bind initially to DnaJ; upon interaction with the DnaJ-bound protein, DnaK hydrolyzes its bound ATP, resulting in the formation of a stable complex. GrpE releases ADP from DnaK; ATP binding to DnaK triggers the release of the substrate protein, thus completing the reaction cycle. Several rounds of ATP-dependent interactions between DnaJ, DnaK and GrpE are required for fully efficient folding. Also involved, together with DnaK and GrpE, in the DNA replication of plasmids through activation of initiation proteins. The sequence is that of Chaperone protein DnaJ from Xanthobacter autotrophicus (strain ATCC BAA-1158 / Py2).